A 311-amino-acid chain; its full sequence is Light-independent protochlorophyllide reductase iron-sulfur ATP-binding protein (311 aa).

Residues Gly-10 to Thr-15 and Lys-39 contribute to the ATP site. Position 14 (Ser-14) interacts with Mg(2+). [4Fe-4S] cluster contacts are provided by Cys-95 and Cys-129. Asn-180 to Arg-181 is an ATP binding site.

This sequence belongs to the NifH/BchL/ChlL family. Homodimer. Protochlorophyllide reductase is composed of three subunits; ChlL, ChlN and ChlB. [4Fe-4S] cluster is required as a cofactor.

The protein localises to the plastid. It is found in the chloroplast. The enzyme catalyses chlorophyllide a + oxidized 2[4Fe-4S]-[ferredoxin] + 2 ADP + 2 phosphate = protochlorophyllide a + reduced 2[4Fe-4S]-[ferredoxin] + 2 ATP + 2 H2O. Its pathway is porphyrin-containing compound metabolism; chlorophyll biosynthesis (light-independent). Its function is as follows. Component of the dark-operative protochlorophyllide reductase (DPOR) that uses Mg-ATP and reduced ferredoxin to reduce ring D of protochlorophyllide (Pchlide) to form chlorophyllide a (Chlide). This reaction is light-independent. The L component serves as a unique electron donor to the NB-component of the complex, and binds Mg-ATP. This chain is Light-independent protochlorophyllide reductase iron-sulfur ATP-binding protein, found in Oltmannsiellopsis viridis (Marine flagellate).